Reading from the N-terminus, the 356-residue chain is Iron-regulated protein A (356 aa).

The first 44 residues, 1–44, serve as a signal peptide directing secretion; the sequence is MIVTGSQVRQGLNTWFVLPLRRTAIGLGCAGVATLFSACGQTQA. 2 hydrophilic regions span residues 75-145 and 240-310; these read QALQ…EQRE and GGPL…ATAR.

As to quaternary structure, the iron-regulated protein A is one unit of the protein complex CPVI-4, which is synthesized under iron deficient conditions.

It is found in the cell inner membrane. Its function is as follows. IrpA occurs under iron-deficient growth conditions in cyanobacterium Synechococcus and disappears in cells recovering from iron starvation. It seems to be involved in iron acquisition, uptake or storage. In Synechococcus elongatus (strain ATCC 33912 / PCC 7942 / FACHB-805) (Anacystis nidulans R2), this protein is Iron-regulated protein A (irpA).